The chain runs to 101 residues: Small ribosomal subunit protein uS14 (101 aa).

It belongs to the universal ribosomal protein uS14 family. In terms of assembly, part of the 30S ribosomal subunit. Contacts proteins S3 and S10.

Binds 16S rRNA, required for the assembly of 30S particles and may also be responsible for determining the conformation of the 16S rRNA at the A site. In Buchnera aphidicola subsp. Schizaphis graminum (strain Sg), this protein is Small ribosomal subunit protein uS14.